The following is a 464-amino-acid chain: MGKRLLDKLWERHVVATNENGLDLLYIDLHLVHEVTSPQAFEGLRLTNRTVRRPDLTFATMDHNIPTKDVWNITDRIAKQQLDTLRENCKQFQVPLADIGDEEQGIVHVIGPELGLTQPGKTIVCGDSHTATHGAFGALAFGIGTSEVEHVLATQTLWQRKPKAMGIELKGKLQKGVYAKDIILHLLSKYGVAVGTGYVMEFYGETIQAMEMEERMTLCNMAIEGGAKAGIIAPDEKTVAYVKGRKYAPRDYETFEKKWFELYTDADAIYDLHISIDVTDLAPYVTWGTNPSMGVRIDEKLPEKHDVNDERAFSYMGLSPGQSTYDIPVQHVFIGSCTNSRLSDLEIAAAVVKGRKVKEGVRALVVPGSKRVRDAAMQKGLHHIFEEAGFEWREPGCSMCLGMNPDQVPEGEHCASTSNRNFEGRQGKGARTHLVSPAMAAAAALYGHFVDTRKESYDGAISYS.

3 residues coordinate [4Fe-4S] cluster: Cys-337, Cys-397, and Cys-400.

The protein belongs to the aconitase/IPM isomerase family. LeuC type 1 subfamily. In terms of assembly, heterodimer of LeuC and LeuD. Requires [4Fe-4S] cluster as cofactor.

The catalysed reaction is (2R,3S)-3-isopropylmalate = (2S)-2-isopropylmalate. It functions in the pathway amino-acid biosynthesis; L-leucine biosynthesis; L-leucine from 3-methyl-2-oxobutanoate: step 2/4. In terms of biological role, catalyzes the isomerization between 2-isopropylmalate and 3-isopropylmalate, via the formation of 2-isopropylmaleate. In Bacillus cereus (strain AH187), this protein is 3-isopropylmalate dehydratase large subunit.